The following is an 816-amino-acid chain: Phenylalanine--tRNA ligase beta subunit (816 aa).

The tRNA-binding domain maps to 40-148 (FEELAALKTG…EGMAHGQRFI (109 aa)). A B5 domain is found at 401–479 (KAVEVQRFSI…RIYGYDNVPT (79 aa)). Residues Asp457, Asp463, Glu466, and Glu467 each coordinate Mg(2+). Positions 721–814 (PVYPAVKRDI…LTDRFGGSFR (94 aa)) constitute an FDX-ACB domain.

This sequence belongs to the phenylalanyl-tRNA synthetase beta subunit family. Type 1 subfamily. Tetramer of two alpha and two beta subunits. Mg(2+) serves as cofactor.

It is found in the cytoplasm. The catalysed reaction is tRNA(Phe) + L-phenylalanine + ATP = L-phenylalanyl-tRNA(Phe) + AMP + diphosphate + H(+). The polypeptide is Phenylalanine--tRNA ligase beta subunit (Desulfotalea psychrophila (strain LSv54 / DSM 12343)).